A 531-amino-acid polypeptide reads, in one-letter code: Peptide chain release factor 3 (531 aa).

Residues 13 to 282 (SKRRTFAIIS…GLTQWAPSPM (270 aa)) form the tr-type G domain. GTP-binding positions include 22–29 (SHPDAGKT), 90–94 (DTPGH), and 144–147 (NKLD).

The protein belongs to the TRAFAC class translation factor GTPase superfamily. Classic translation factor GTPase family. PrfC subfamily.

The protein resides in the cytoplasm. In terms of biological role, increases the formation of ribosomal termination complexes and stimulates activities of RF-1 and RF-2. It binds guanine nucleotides and has strong preference for UGA stop codons. It may interact directly with the ribosome. The stimulation of RF-1 and RF-2 is significantly reduced by GTP and GDP, but not by GMP. The sequence is that of Peptide chain release factor 3 from Vibrio cholerae serotype O1 (strain ATCC 39315 / El Tor Inaba N16961).